The primary structure comprises 352 residues: B1 bradykinin receptor (352 aa).

Over 1 to 41 (MASWPPLELQSSNQSQLFPQNATACDNAPEAWDLLHRVLPT) the chain is Extracellular. N-linked (GlcNAc...) asparagine glycosylation is found at Asn13 and Asn21. Residues 42-62 (FIISICSFGLLGNLFVLLVFL) traverse the membrane as a helical segment. The Cytoplasmic portion of the chain corresponds to 63–72 (LPRRRLNVAE). A helical membrane pass occupies residues 73 to 93 (IYLANLAASDLVFVLGLPFWA). Over 94–110 (ENIWNQFNWPFGALLCR) the chain is Extracellular. Cys109 and Cys188 are oxidised to a cystine. Residues 111-131 (GINGVIKANLFISIFLVVAIS) form a helical membrane-spanning segment. Residues 132–153 (QDRYCLLVHPMASRRRQRRRQA) are Cytoplasmic-facing. A helical transmembrane segment spans residues 154-174 (RVTCVLIWVVGGLLSIPTFLL). Residues 175 to 206 (RSIQAVPDLNITACILLLPHEAWHFARIVELN) lie on the Extracellular side of the membrane. An N-linked (GlcNAc...) asparagine glycan is attached at Asn184. Residues 207–227 (ILAFLLPLAAIVFFNYHILAS) traverse the membrane as a helical segment. Topologically, residues 228–250 (LRGREEVSRTRCGGRKDSKTTAL) are cytoplasmic. The helical transmembrane segment at 251 to 271 (ILTLVVAFLVCWAPYHFFAFL) threads the bilayer. The Extracellular segment spans residues 272–294 (EFLFQVQAIRGCFWEDFIDLGLQ). Residues 295–315 (LANFLAFTNSSLNPVIYVFVG) traverse the membrane as a helical segment. Topologically, residues 316-352 (RLFRTKVWELYKQCTPKSLAPISSSHRKEIFQLFWRN) are cytoplasmic. Cys329 carries S-palmitoyl cysteine lipidation.

It belongs to the G-protein coupled receptor 1 family. Bradykinin receptor subfamily. BDKRB1 sub-subfamily.

The protein localises to the cell membrane. This is a receptor for bradykinin. Could be a factor in chronic pain and inflammation. The sequence is that of B1 bradykinin receptor (BDKRB1) from Chlorocebus aethiops (Green monkey).